The sequence spans 513 residues: uncharacterized protein (513 aa).

One can recognise a TRAM domain in the interval 3 to 61; sequence NLKIGQKLQLEIERMGINGEGIGVISGRLVFIPYALPGEEVLVEITENARNFSRAKLVK. Residues glutamine 309, tyrosine 338, aspartate 359, and aspartate 407 each coordinate S-adenosyl-L-methionine. Catalysis depends on cysteine 434, which acts as the Nucleophile.

The protein belongs to the class I-like SAM-binding methyltransferase superfamily. RNA M5U methyltransferase family.

This is an uncharacterized protein from Lactococcus lactis subsp. lactis (strain IL1403) (Streptococcus lactis).